Consider the following 352-residue polypeptide: uncharacterized protein (352 aa).

Residues M1–R40 are disordered. Basic and acidic residues predominate over residues F8–P21. The span at Q22 to P36 shows a compositional bias: low complexity. Residues M317–Y333 form a helical membrane-spanning segment.

Its subcellular location is the host cell membrane. This is an uncharacterized protein from Diadromus pulchellus idnoreovirus 1 (DpIRV-1).